The sequence spans 429 residues: Cell cycle protein kinase spo4 (429 aa).

Positions 40 to 402 (YHVVKLVGAG…KAKTALQHEF (363 aa)) constitute a Protein kinase domain. ATP is bound by residues 46–54 (VGAGSFSSV) and Lys-95. Asp-182 functions as the Proton acceptor in the catalytic mechanism. Thr-264 bears the Phosphothreonine mark.

It belongs to the protein kinase superfamily. Ser/Thr protein kinase family. CDC7 subfamily. As to quaternary structure, interacts with spo6.

It is found in the nucleus. It catalyses the reaction L-seryl-[protein] + ATP = O-phospho-L-seryl-[protein] + ADP + H(+). It carries out the reaction L-threonyl-[protein] + ATP = O-phospho-L-threonyl-[protein] + ADP + H(+). In terms of biological role, required for the initiation of meiosis II and progression through anaphase II. The chain is Cell cycle protein kinase spo4 (spo4) from Schizosaccharomyces pombe (strain 972 / ATCC 24843) (Fission yeast).